Consider the following 67-residue polypeptide: Probable tautomerase bsl7456 (67 aa).

Proline 2 functions as the Proton acceptor; via imino nitrogen in the catalytic mechanism.

Belongs to the 4-oxalocrotonate tautomerase family.

The polypeptide is Probable tautomerase bsl7456 (Bradyrhizobium diazoefficiens (strain JCM 10833 / BCRC 13528 / IAM 13628 / NBRC 14792 / USDA 110)).